The sequence spans 142 residues: Large ribosomal subunit protein uL13 (142 aa).

It belongs to the universal ribosomal protein uL13 family. As to quaternary structure, part of the 50S ribosomal subunit.

In terms of biological role, this protein is one of the early assembly proteins of the 50S ribosomal subunit, although it is not seen to bind rRNA by itself. It is important during the early stages of 50S assembly. The sequence is that of Large ribosomal subunit protein uL13 from Xylella fastidiosa (strain 9a5c).